Reading from the N-terminus, the 349-residue chain is Nicotinate-nucleotide--dimethylbenzimidazole phosphoribosyltransferase (349 aa).

Glutamate 318 (proton acceptor) is an active-site residue.

The protein belongs to the CobT family.

It carries out the reaction 5,6-dimethylbenzimidazole + nicotinate beta-D-ribonucleotide = alpha-ribazole 5'-phosphate + nicotinate + H(+). It participates in nucleoside biosynthesis; alpha-ribazole biosynthesis; alpha-ribazole from 5,6-dimethylbenzimidazole: step 1/2. Catalyzes the synthesis of alpha-ribazole-5'-phosphate from nicotinate mononucleotide (NAMN) and 5,6-dimethylbenzimidazole (DMB). This chain is Nicotinate-nucleotide--dimethylbenzimidazole phosphoribosyltransferase, found in Geobacter sp. (strain M21).